The chain runs to 215 residues: Protein GrpE (215 aa).

Over residues 1–28 (MKHTSDTPSNSDMPSDSQATQPNASATG) the composition is skewed to polar residues. The disordered stretch occupies residues 1–52 (MKHTSDTPSNSDMPSDSQATQPNASATGQAAHAYSSQAQRASADAQAVAGDE). The segment covering 29–52 (QAAHAYSSQAQRASADAQAVAGDE) has biased composition (low complexity).

This sequence belongs to the GrpE family. As to quaternary structure, homodimer.

It localises to the cytoplasm. Its function is as follows. Participates actively in the response to hyperosmotic and heat shock by preventing the aggregation of stress-denatured proteins, in association with DnaK and GrpE. It is the nucleotide exchange factor for DnaK and may function as a thermosensor. Unfolded proteins bind initially to DnaJ; upon interaction with the DnaJ-bound protein, DnaK hydrolyzes its bound ATP, resulting in the formation of a stable complex. GrpE releases ADP from DnaK; ATP binding to DnaK triggers the release of the substrate protein, thus completing the reaction cycle. Several rounds of ATP-dependent interactions between DnaJ, DnaK and GrpE are required for fully efficient folding. The polypeptide is Protein GrpE (Ralstonia pickettii (strain 12J)).